The sequence spans 352 residues: Mitochondrial adenine nucleotide transporter ADNT1 (352 aa).

3 Solcar repeats span residues 36-123 (KSIC…ASNG), 139-227 (LTPL…LKDW), and 242-343 (LTVV…VKDV). The next 6 helical transmembrane spans lie at 41–61 (SLFA…PLER), 100–120 (GTNC…YEQA), 145–162 (LGAG…TYPM), 202–221 (GWLP…FSVY), 242–263 (LTVV…TIAY), and 324–340 (VKVV…YEMV).

The protein belongs to the mitochondrial carrier (TC 2.A.29) family. As to expression, expressed in seedling radicles and roots, vasculature of cotyledons, leaf primordia, leaves and sepals.

It localises to the mitochondrion inner membrane. Its activity is regulated as follows. Inhibited by pyridoxal 5-phosphate, bathophenanthroline, mersalyl, p-hydroxymercuribenzoate and tannic acid. Its function is as follows. Mitochondrial adenylate carrier that catalyzes specifically the transport of ATP, ADP and AMP by a counter-exchange mechanism across the inner mitochondrial membrane. Substrate preference in reconstituted proteoliposomes is ATP &gt; AMP &gt; ADP. May play a role in oxidative phosphorylation and be important for the provision of energy required to support growth in heterotrophic tissues. This chain is Mitochondrial adenine nucleotide transporter ADNT1 (ADNT1), found in Arabidopsis thaliana (Mouse-ear cress).